Consider the following 349-residue polypeptide: ALA-interacting subunit 3 (349 aa).

Residues 1 to 21 show a composition bias toward low complexity; it reads MSSNTASSSAGAAGSGDSSAA. Residues 1–30 are disordered; sequence MSSNTASSSAGAAGSGDSSAARKNSKRPKY. Position 2 is an N-acetylserine (S2). Residues 50 to 70 form a helical membrane-spanning segment; that stretch reads VISTFLIVSVIFIPLGVISLF. 3 N-linked (GlcNAc...) asparagine glycosylation sites follow: N181, N190, and N223. The helical transmembrane segment at 305–325 threads the bilayer; sequence LGIAYLTVGGICFILALAFTI.

Belongs to the CDC50/LEM3 family. In terms of assembly, interacts with ALA2 and ALA3 in a heterologous system. In terms of tissue distribution, expressed in roots, leaves, stems, flowers and siliques.

It is found in the golgi apparatus membrane. Its subcellular location is the prevacuolar compartment membrane. The protein resides in the endoplasmic reticulum membrane. Functionally, required for the lipid transport activity of the ALA/ALIS P4-ATPase complex. The polypeptide is ALA-interacting subunit 3 (ALIS3) (Arabidopsis thaliana (Mouse-ear cress)).